The primary structure comprises 85 residues: Small ribosomal subunit protein bS16 (85 aa).

This sequence belongs to the bacterial ribosomal protein bS16 family.

This chain is Small ribosomal subunit protein bS16, found in Buchnera aphidicola subsp. Schizaphis graminum (strain Sg).